The following is a 77-amino-acid chain: Putative neurotoxin 2 (77 aa).

A signal peptide spans 1-25 (MKAFIVILSIAIVLLLIVSIKETSA). Positions 26-46 (KDCKQECVKRYTNGDFTNFFK) are excised as a propeptide.

The protein belongs to the scolopendra neurotoxin 3 family. In terms of processing, contains 2 disulfide bonds. Expressed by the venom gland.

The protein resides in the secreted. The polypeptide is Putative neurotoxin 2 (Scolopendra mutilans (Chinese red-headed centipede)).